A 668-amino-acid polypeptide reads, in one-letter code: Protein-glutamine gamma-glutamyltransferase (668 aa).

Residues 1–6 are Cytoplasmic-facing; sequence MNAIPR. A helical transmembrane segment spans residues 7 to 27; the sequence is VALVWLLVAQVLVILPHLAYM. Over 28–50 the chain is Periplasmic; sequence PLWIAAMWLGCAAWRVQVFRMRA. A helical transmembrane segment spans residues 51–71; the sequence is GYPRAWVKLALALLAGAGVWL. Residues 72-74 lie on the Cytoplasmic side of the membrane; sequence SRG. Residues 75 to 95 form a helical membrane-spanning segment; the sequence is SLVGLDAGAVLLIAAFILKLV. Residues 96–103 lie on the Periplasmic side of the membrane; that stretch reads EMKTRRDA. 2 consecutive transmembrane segments (helical) span residues 104-124 and 125-145; these read LVLVFLGFFAVVVGYLFDDGF and LAALYSLLPVTALLAALIGLQ. Over 146–158 the chain is Cytoplasmic; the sequence is QSAFASRPWPTLR. A helical membrane pass occupies residues 159–179; sequence LAGGLLLQALPLMLLLFLFFP. Residues 180–548 are Periplasmic-facing; sequence RLGPLWSLPM…FGGLDPTRLG (369 aa). Residue Cys404 is the Nucleophile of the active site. Active-site residues include His448 and Asp464. Residues 549-569 traverse the membrane as a helical segment; it reads LLLGAAAILSVGLLALFLLKP. The Cytoplasmic segment spans residues 570-668; the sequence is WQGRGDLRSR…TRDGRGEEQA (99 aa).

This sequence belongs to the transglutaminase-like superfamily.

The protein resides in the cell inner membrane. The enzyme catalyses L-glutaminyl-[protein] + L-lysyl-[protein] = [protein]-L-lysyl-N(6)-5-L-glutamyl-[protein] + NH4(+). Functionally, displays transglutaminase activity (TGase) in vitro. Plays a critical role in the viability of P.aeruginosa. Might contribute to an essential function linked to the cell wall. In Pseudomonas aeruginosa (strain ATCC 15692 / DSM 22644 / CIP 104116 / JCM 14847 / LMG 12228 / 1C / PRS 101 / PAO1), this protein is Protein-glutamine gamma-glutamyltransferase (tgpA).